The primary structure comprises 245 residues: Histone deacetylase HDT1 (245 aa).

M1 bears the N-acetylmethionine mark. Required to repress transcription stretches follow at residues 2–5 (EFWG) and 101–162 (GYSE…EEEE). Positions 99 to 245 (PQGYSEEEEE…HNKAKHAAAK (147 aa)) are disordered. Residues 103–113 (SEEEEEEEEEV) are compositionally biased toward acidic residues. Positions 114-124 (PAGNAAKAVAK) are enriched in low complexity. Positions 137-162 (DDEEDESDSDGMDEDDSDGEDSEEEE) are enriched in acidic residues. Over residues 178 to 195 (TTPKAPVSAKKAKVAVTP) the composition is skewed to low complexity. Positions 208–234 (ANQSPKSASQVSCGSCKKTFNSGNALE) are enriched in polar residues. A Phosphoserine modification is found at S211. The C2H2-type zinc finger occupies 218-241 (VSCGSCKKTFNSGNALESHNKAKH).

Belongs to the histone deacetylase HD2 family. In terms of assembly, interacts with DNMT2. Interacts with DEK3. As to expression, expressed in leaves, roots, stems, young plantlets, flowers and siliques. Highest levels in ovules, embryos, shoot apical meristems and first leaves. Also expressed in somatic embryos.

Its subcellular location is the nucleus. The protein resides in the nucleolus. Probably mediates the deacetylation of lysine residues on the N-terminal part of the core histones (H2A, H2B, H3 and H4). Histone deacetylation gives a tag for epigenetic repression and plays an important role in transcriptional regulation, cell cycle progression and developmental events. Required for histone H3 'Lys-9' deacetylation. Involved in rRNA gene silencing in nucleolar dominance. Seems to be implicated in the regulation of genes involved in seeds development. In Arabidopsis thaliana (Mouse-ear cress), this protein is Histone deacetylase HDT1.